Consider the following 229-residue polypeptide: Large ribosomal subunit protein uL1 (229 aa).

The protein belongs to the universal ribosomal protein uL1 family. As to quaternary structure, part of the 50S ribosomal subunit.

Functionally, binds directly to 23S rRNA. The L1 stalk is quite mobile in the ribosome, and is involved in E site tRNA release. Protein L1 is also a translational repressor protein, it controls the translation of the L11 operon by binding to its mRNA. In Streptococcus pneumoniae serotype 2 (strain D39 / NCTC 7466), this protein is Large ribosomal subunit protein uL1.